The chain runs to 296 residues: MENGLNGTFVLKTAAGANIIGHTAQFDHGINIHWMKDLLRCKAIKPGVLANKGVINTSAYPVTIYNTGTTDLHINDKLWVLPPLTDKAMQTTMFEGNVFPPEVYEKTFIQAELSQFIDDMILLHELSTAVPLKKVNTESVAEKNFSTALGVKALGDQLSSNFFWKRLVAAYYNHNRYSTPEEVKLGIFRFISKNWIMHLIESPKGTSSRYNNLFKSWSAVGANFTLHPSQEFDTMEGASKSEEYLKNIFFMRSFLTAIKHAANTWVEFKMPTVGTITGAKETHIRPNHDFSLTLTM.

This is an uncharacterized protein from Magallana gigas (Pacific oyster).